The primary structure comprises 719 residues: Calpain-12 (719 aa).

Residues 45–341 form the Calpain catalytic domain; that stretch reads LFRDPYFPAG…FDTVQICSLS (297 aa). Active-site residues include cysteine 105, histidine 259, and asparagine 283. The interval 342 to 540 is domain III; it reads PEVLGPSPEG…DDVISADLQS (199 aa). Positions 393–402 are enriched in acidic residues; it reads DEEDDEDEEG. A disordered region spans residues 393–418; the sequence is DEEDDEDEEGPWGGWGAAGARGPARG. The segment at 541–719 is domain IV; it reads LQGPYLPLEL…RQWMEVATFS (179 aa). The EF-hand domain occupies 620-655; that stretch reads GYLLEWQAIFNKFDEDTSGTMNSYELRLALNAAGFH. Aspartate 633, aspartate 635, serine 637, threonine 639, and glutamate 644 together coordinate Ca(2+).

It belongs to the peptidase C2 family.

Calcium-regulated non-lysosomal thiol-protease. The chain is Calpain-12 (CAPN12) from Homo sapiens (Human).